Consider the following 418-residue polypeptide: Bifunctional enzyme IspD/IspF (418 aa).

Residues 1-261 (MADTPALIPQ…EFKRASDMNF (261 aa)) are 2-C-methyl-D-erythritol 4-phosphate cytidylyltransferase. A 2-C-methyl-D-erythritol 2,4-cyclodiphosphate synthase region spans residues 262–418 (RIGEGWDIHA…RATVLLRKFI (157 aa)). Residues D268 and H270 each coordinate a divalent metal cation. Residues 268-270 (DIH) and 294-295 (HS) contribute to the 4-CDP-2-C-methyl-D-erythritol 2-phosphate site. A divalent metal cation is bound at residue H302. Residues 316–318 (DIG) and 321–325 (FPDTD) each bind 4-CDP-2-C-methyl-D-erythritol 2-phosphate.

In the N-terminal section; belongs to the IspD/TarI cytidylyltransferase family. IspD subfamily. It in the C-terminal section; belongs to the IspF family. A divalent metal cation is required as a cofactor.

It carries out the reaction 2-C-methyl-D-erythritol 4-phosphate + CTP + H(+) = 4-CDP-2-C-methyl-D-erythritol + diphosphate. The catalysed reaction is 4-CDP-2-C-methyl-D-erythritol 2-phosphate = 2-C-methyl-D-erythritol 2,4-cyclic diphosphate + CMP. It functions in the pathway isoprenoid biosynthesis; isopentenyl diphosphate biosynthesis via DXP pathway; isopentenyl diphosphate from 1-deoxy-D-xylulose 5-phosphate: step 2/6. Its pathway is isoprenoid biosynthesis; isopentenyl diphosphate biosynthesis via DXP pathway; isopentenyl diphosphate from 1-deoxy-D-xylulose 5-phosphate: step 4/6. In terms of biological role, bifunctional enzyme that catalyzes the formation of 4-diphosphocytidyl-2-C-methyl-D-erythritol from CTP and 2-C-methyl-D-erythritol 4-phosphate (MEP) (IspD), and catalyzes the conversion of 4-diphosphocytidyl-2-C-methyl-D-erythritol 2-phosphate (CDP-ME2P) to 2-C-methyl-D-erythritol 2,4-cyclodiphosphate (ME-CPP) with a corresponding release of cytidine 5-monophosphate (CMP) (IspF). The polypeptide is Bifunctional enzyme IspD/IspF (Albidiferax ferrireducens (strain ATCC BAA-621 / DSM 15236 / T118) (Rhodoferax ferrireducens)).